Consider the following 935-residue polypeptide: Potassium channel AKT1 (935 aa).

The Cytoplasmic segment spans residues 1 to 106 (MARWGAARMA…YDRRYRIWET (106 aa)). A helical membrane pass occupies residues 107–127 (FLIVLVVYSAWVSPFEFGFIP). Topologically, residues 128 to 136 (KPTGALATA) are extracellular. The helical transmembrane segment at 137-157 (DNVVNAFFAVDIILTFFVAYL) threads the bilayer. At 158–178 (DKMSYMLEDDPKKIAWRYSTT) the chain is on the cytoplasmic side. The helical transmembrane segment at 179–199 (WLVLDVASTIPSEFARRILPS) threads the bilayer. Topologically, residues 200 to 205 (KLRSYG) are extracellular. Residues 206 to 226 (FFNMLRLWRLRRVSSLFSRLE) form a helical; Voltage-sensor membrane-spanning segment. The Cytoplasmic segment spans residues 227–240 (KDRHFNYFWVRCAK). Residues 241 to 261 (LICVTLFAVHCAACFYYLLAD) traverse the membrane as a helical segment. At 262 to 288 (RYPVPTSTWIGNYMADFHERSLWIRYV) the chain is on the extracellular side. An intramembrane region (pore-forming) is located at residues 289 to 308 (TSVYWSITTLTTVGYGDLHA). At 309-312 (ENTR) the chain is on the extracellular side. Residues 313–333 (EMIFNIFYMLFNLGLTAYLIG) traverse the membrane as a helical segment. The Cytoplasmic segment spans residues 334–935 (NMTNLVVHGT…WDAEKMKGKS (602 aa)). 419-538 (LFQGVSNDLI…TIIMNNLIQF (120 aa)) contributes to the a nucleoside 3',5'-cyclic phosphate binding site. ANK repeat units lie at residues 565-594 (DLPI…DPNE), 598-627 (DGHT…DPNA), 631-660 (EGKV…DLSS), 662-691 (DTGL…DVNR), 695-724 (DGTT…DIDK), and 728-757 (NGWT…ATAS). The disordered stretch occupies residues 826–854 (SQAQRETDHPLSRGGLAATGSPNPSSGSR). Polar residues predominate over residues 845 to 854 (GSPNPSSGSR). Positions 859–935 (RVTISCPEKG…WDAEKMKGKS (77 aa)) constitute a KHA domain.

Belongs to the potassium channel family. Plant (TC 1.A.1.4) subfamily. In terms of assembly, the potassium channel is probably a homo- or heterotetrameric complex of pore-forming subunits. Highly expressed in the epidermis and endodermis of roots, and at lower level in cells of the vasculature and the cortex. Expressed in xylem parenchyma, phloem and mesophyll cells of leaves.

The protein resides in the membrane. Functionally, highly selective inward-rectifying potassium channel that mediates potassium uptake by plant roots. This is Potassium channel AKT1 (AKT1) from Oryza sativa subsp. indica (Rice).